The sequence spans 697 residues: Polyribonucleotide nucleotidyltransferase (697 aa).

Mg(2+)-binding residues include aspartate 489 and aspartate 495. A KH domain is found at 556-615 (PRIETIKIKPDKIREVIGSGGKVIRGITEATGVKIEIQDDGTINIASADPEATKKAIAMI). Residues 625 to 693 (GKTYKGRIVK…RSGRVKLSRK (69 aa)) form the S1 motif domain.

It belongs to the polyribonucleotide nucleotidyltransferase family. Mg(2+) is required as a cofactor.

The protein localises to the cytoplasm. It carries out the reaction RNA(n+1) + phosphate = RNA(n) + a ribonucleoside 5'-diphosphate. Functionally, involved in mRNA degradation. Catalyzes the phosphorolysis of single-stranded polyribonucleotides processively in the 3'- to 5'-direction. This chain is Polyribonucleotide nucleotidyltransferase, found in Bdellovibrio bacteriovorus (strain ATCC 15356 / DSM 50701 / NCIMB 9529 / HD100).